The following is a 334-amino-acid chain: Heat-inducible transcription repressor HrcA (334 aa).

This sequence belongs to the HrcA family.

Negative regulator of class I heat shock genes (grpE-dnaK-dnaJ and groELS operons). Prevents heat-shock induction of these operons. In Acidovorax ebreus (strain TPSY) (Diaphorobacter sp. (strain TPSY)), this protein is Heat-inducible transcription repressor HrcA.